The primary structure comprises 384 residues: Ceramide very long chain fatty acid hydroxylase SCS7 (384 aa).

Residues 1–197 (MSTNTSKTLE…NFLEPLTKTA (197 aa)) lie on the Cytoplasmic side of the membrane. In terms of domain architecture, Cytochrome b5 heme-binding spans 9 to 90 (LELFSKKTVQ…EDEYLIGYLA (82 aa)). The heme site is built by histidine 45 and histidine 72. Residues 198–216 (WWVVPVAWLPVVVYHMGVA) traverse the membrane as a helical segment. Residues 217 to 221 (LKNMN) lie on the Lumenal side of the membrane. A helical membrane pass occupies residues 222–246 (QLFACFLFCVGVFVWTLIEYGLHRF). Histidine 244, histidine 249, histidine 268, histidine 271, and histidine 272 together coordinate Zn(2+). Over 247-284 (LFHFDDWLPESNIAFATHFLLHGCHHYLPMDKYRLVMP) the chain is Cytoplasmic. A helical transmembrane segment spans residues 285–302 (PTLFVILCAPFYKLVFAL). The Lumenal segment spans residues 303-304 (LP). The chain crosses the membrane as a helical span at residues 305–328 (LYWAYAGFAGGLFGYVCYDECHFF). Residues histidine 326, histidine 330, histidine 345, histidine 348, and histidine 349 each coordinate Zn(2+). Residues 329–384 (LHHSKLPPFMRKLKKYHLEHHYKNYQLGFGVTSWFWDEVFGTYLGPDAPLSKMKYE) are Cytoplasmic-facing.

Belongs to the sterol desaturase family. SCS7 subfamily. The cofactor is Zn(2+).

It localises to the endoplasmic reticulum membrane. The enzyme catalyses an N-(1,2 saturated acyl)-(4R)-hydroxysphinganine + 2 Fe(II)-[cytochrome b5] + O2 + 2 H(+) = an N-(2R-hydroxyacyl)-4R-hydroxysphinganine + 2 Fe(III)-[cytochrome b5] + H2O. It carries out the reaction an N-(1,2-saturated acyl)sphinganine + 2 Fe(II)-[cytochrome b5] + O2 + 2 H(+) = an N-[(2'R)-hydroxyacyl]sphinganine + 2 Fe(III)-[cytochrome b5] + H2O. The catalysed reaction is N-hexacosanoyl-(4R)-hydroxysphinganine + 2 Fe(II)-[cytochrome b5] + O2 + 2 H(+) = N-(2-hydroxyhexacosanyl)-(4R)-hydroxysphinganine + 2 Fe(III)-[cytochrome b5] + H2O. The protein operates within sphingolipid metabolism. In terms of biological role, ceramide hydroxylase involved in the hydroxylation of sphingolipid-associated very long chain fatty acids. Postulated to hydroxylate the very long chain fatty acid of dihydroceramides and phytoceramides at C-2. The sequence is that of Ceramide very long chain fatty acid hydroxylase SCS7 from Saccharomyces cerevisiae (strain ATCC 204508 / S288c) (Baker's yeast).